The following is a 328-amino-acid chain: MIFSILEHILTHISFSVVSIVLTIYFLTLLVNLDEIIGFFDSLDKGIIITFFGITGLLFTRWIYSGHFPLSNLYESLIFLSWAFSIIHMVSYFNKKQQNHLNAITAPSAIFIQGFATSGLLNKMPQSAILVPALQSQWLMMHVSLMILGYGALLCGSLLSIALLVITFRKVGPTFWKKNIKKNFLLNELFSFDVLYYINERNSILLQQNITFSFSKNYYRYQLIQQLDYWSFRIISLGFIFLTVGILSGAVWANETWGSYWNWDPKETWAFITWTIFAIYLHIKTNRNVRGINSAIVASIGFLLIWICYFGVILLGIGLHSYGSFTSN.

A run of 8 helical transmembrane segments spans residues I13–L33, G46–G66, L73–F93, L101–L121, M146–I166, I234–N254, W263–I283, and A295–L315.

This sequence belongs to the CcmF/CycK/Ccl1/NrfE/CcsA family. In terms of assembly, may interact with Ccs1.

It is found in the plastid. Its subcellular location is the chloroplast thylakoid membrane. Its function is as follows. Required during biogenesis of c-type cytochromes (cytochrome c6 and cytochrome f) at the step of heme attachment. This Crucihimalaya wallichii (Rock-cress) protein is Cytochrome c biogenesis protein CcsA.